Here is a 296-residue protein sequence, read N- to C-terminus: Elongation factor Ts (296 aa).

The tract at residues 79–82 (TDFV) is involved in Mg(2+) ion dislocation from EF-Tu.

The protein belongs to the EF-Ts family.

The protein localises to the cytoplasm. Functionally, associates with the EF-Tu.GDP complex and induces the exchange of GDP to GTP. It remains bound to the aminoacyl-tRNA.EF-Tu.GTP complex up to the GTP hydrolysis stage on the ribosome. The protein is Elongation factor Ts (tsf) of Spiroplasma citri.